The chain runs to 183 residues: Thioredoxin-like protein CITRX, chloroplastic (183 aa).

The N-terminal 81 residues, 1-81, are a transit peptide targeting the chloroplast; the sequence is MALVQSRTFP…REDYLVKKLS (81 aa). The 102-residue stretch at 82 to 183 folds into the Thioredoxin domain; the sequence is AQELQELVKG…MMHDIIDNEM (102 aa). Residues C106 and C109 each act as nucleophile in the active site. Residues C106 and C109 are joined by a disulfide bond.

This sequence belongs to the thioredoxin family. Plant CITRX-type subfamily. Interacts with FLN1 and FLN2. Interacts with MRL7.

The protein localises to the plastid. Its subcellular location is the chloroplast. Thiol-disulfide oxidoreductase that plays a role in proper chloroplast development, most likely through regulating plastid-encoded polymerase (PEP) dependent chloroplast transcription. Acts as a component of the transcriptionally active plastid chromosome that is required for plastid gene expression. This is Thioredoxin-like protein CITRX, chloroplastic from Arabidopsis thaliana (Mouse-ear cress).